A 119-amino-acid chain; its full sequence is Large ribosomal subunit protein bL20 (119 aa).

This sequence belongs to the bacterial ribosomal protein bL20 family.

Its function is as follows. Binds directly to 23S ribosomal RNA and is necessary for the in vitro assembly process of the 50S ribosomal subunit. It is not involved in the protein synthesizing functions of that subunit. In Anoxybacillus flavithermus (strain DSM 21510 / WK1), this protein is Large ribosomal subunit protein bL20.